The chain runs to 353 residues: MSEPIKPRIDFEQPLEPPQEPVLRANVAFDEQQAEHFFPAAPELQQEEEEGRAEGIINAALKPKRSLWRKMVTAGLTLFGVSVVAQGVQWVHTAWVQQDWIAMGGGVAGGLIVFAGVGSVVTEWRRLYRLRQRAEERDVARELLHSHGLGKGREFCEKLARQAGLDQGHPALQRWQASLHETQNDREVVALYAKLVQPVLDNQARREISRSAAESTLMIAVSPLAVVDMAFIAWRNIRLINRIAALYGIELGYFSRLRLFRLVLLNIAFAGASELVREVGMDWMSQDLAARLSARAAQGIGAGLLTARLGIKAMELCRPLPWLEGEKPKLGDFRSQLIGQLKDTMKKSDNKAK.

3 helical membrane-spanning segments follow: residues 71–91 (MVTA…VQWV), 101–121 (IAMG…GSVV), and 214–234 (ESTL…FIAW).

The protein belongs to the UPF0283 family.

Its subcellular location is the cell inner membrane. The chain is UPF0283 membrane protein Spro_2618 from Serratia proteamaculans (strain 568).